Here is a 195-residue protein sequence, read N- to C-terminus: Obelin (195 aa).

A propeptide spanning residues 1 to 6 (MASKYA) is cleaved from the precursor. 4 consecutive EF-hand domains span residues 17-52 (KWIKRHKFMFDYLDINGNGQITLDEIVSKASDDICK), 53-88 (NLGATPAQTQRHQDCVEAFFRGCGLEYGKETKFPEF), 110-145 (LIREWGDAVFDIFDKDGSGTITLDEWKAYGRISGIS), and 146-181 (PSEEDCEKTFQHCDLDNSGELDVDEMTRQHLGFWYT). Ca(2+) is bound by residues Asp30, Asn32, Asn34, Gln36, and Glu41. 10 residues coordinate Ca(2+): Asp123, Asp125, Ser127, Thr129, Glu134, Asp159, Asp161, Ser163, Glu165, and Glu170.

The protein belongs to the aequorin family.

Ca(2+)-dependent bioluminescence photoprotein. Displays an emission peak at 495 nm (blue light). Trace amounts of calcium ion trigger the intramolecular oxidation of the chromophore, coelenterazine into coelenteramide and CO(2) with the concomitant emission of light. This chain is Obelin, found in Obelia geniculata (Knotted thread hydroid).